Here is an 854-residue protein sequence, read N- to C-terminus: Nucleolar MIF4G domain-containing protein 1 (854 aa).

The interval 2–275 (PRNVPEVNGV…EEDPDWQVLQ (274 aa)) is necessary for nucleolar localization and for targeting PPP1CA to the nucleolus. The residue at position 60 (Ser60) is a Phosphoserine. 2 disordered regions span residues 66–215 (ESRS…PLSF) and 231–333 (SGGG…GEKY). Positions 76–99 (PGGRKSRKELRKEKRHLRKARRLQ) are enriched in basic residues. Over residues 104-113 (SGSGDQGGNV) the composition is skewed to gly residues. Residues 128–173 (VRPTPAKATATPAKASAPSTNTKASAAQPKAKAKGAPGKPGPATAT) are compositionally biased toward low complexity. Basic and acidic residues predominate over residues 188–197 (REIRKLERCL). A compositionally biased stretch (acidic residues) spans 265–280 (SEEDPDWQVLQEDQED). Basic and acidic residues-rich tracts occupy residues 281–291 (VNSKRRGEAES), 303–315 (RFAE…RSSS), and 322–331 (QESHSVESGE). A Required for efficient binding to PPP1CA and for targeting PPP1CA to the nucleolus motif is present at residues 301 to 304 (KVRF). Residues Ser311, Ser314, and Ser315 each carry the phosphoserine modification. An MIF4G domain is found at 356–553 (KKHVKGLINR…ETMLALKNND (198 aa)). The MI domain occupies 648–764 (DVRRIIFCTL…PLSVLKVVEF (117 aa)).

It belongs to the CWC22 family. As to quaternary structure, may interact with EIF4A1, EIF4A2 and EIF4A3. Interacts with PPP1CA and PPP1CC.

The protein resides in the nucleus. The protein localises to the nucleolus. In terms of biological role, plays a role in targeting PPP1CA to the nucleolus. In Mus musculus (Mouse), this protein is Nucleolar MIF4G domain-containing protein 1 (Nom1).